A 304-amino-acid chain; its full sequence is Cell division protein ZipA (304 aa).

Residues Met-1–Arg-5 lie on the Periplasmic side of the membrane. A helical membrane pass occupies residues Leu-6–Thr-26. Residues Ser-27–His-304 are Cytoplasmic-facing. A disordered region spans residues Arg-31–Lys-165. Positions Ala-121 to Glu-132 are enriched in basic and acidic residues. The segment covering Ala-137–Pro-158 has biased composition (low complexity).

This sequence belongs to the ZipA family. In terms of assembly, interacts with FtsZ via their C-terminal domains.

Its subcellular location is the cell inner membrane. Essential cell division protein that stabilizes the FtsZ protofilaments by cross-linking them and that serves as a cytoplasmic membrane anchor for the Z ring. Also required for the recruitment to the septal ring of downstream cell division proteins. The chain is Cell division protein ZipA from Erwinia tasmaniensis (strain DSM 17950 / CFBP 7177 / CIP 109463 / NCPPB 4357 / Et1/99).